We begin with the raw amino-acid sequence, 80 residues long: Dermaseptin-DA3 (80 aa).

The first 22 residues, 1-22 (MAFLKKSLFLVLFLGLVSLSIC), serve as a signal peptide directing secretion. Residues 23-42 (EEKRENEDEEEQEDDEQSEE) constitute a propeptide that is removed on maturation. The segment at 24–48 (EKRENEDEEEQEDDEQSEEKRGMWS) is disordered. A compositionally biased stretch (acidic residues) spans 29–40 (EDEEEQEDDEQS). Residue Leu77 is modified to Leucine amide. The propeptide occupies 79–80 (EQ).

The protein belongs to the frog skin active peptide (FSAP) family. Dermaseptin subfamily. In terms of tissue distribution, expressed by the skin glands.

Its subcellular location is the secreted. Its function is as follows. Possesses a potent antimicrobial activity against Gram-positive and Gram-negative bacteria. Probably acts by disturbing membrane functions with its amphipathic structure. This chain is Dermaseptin-DA3, found in Agalychnis dacnicolor (Giant Mexican leaf frog).